Reading from the N-terminus, the 309-residue chain is Thioredoxin reductase (309 aa).

35-42 (EKQFPGGK) contacts FAD. Cys134 and Cys137 are disulfide-bonded. Position 277-286 (277-286 (DIVDKNVRQI)) interacts with FAD.

Belongs to the class-II pyridine nucleotide-disulfide oxidoreductase family. In terms of assembly, homodimer. FAD is required as a cofactor.

Its subcellular location is the cytoplasm. It catalyses the reaction [thioredoxin]-dithiol + NADP(+) = [thioredoxin]-disulfide + NADPH + H(+). The sequence is that of Thioredoxin reductase (trxB) from Ureaplasma parvum serovar 3 (strain ATCC 700970).